The primary structure comprises 859 residues: Active breakpoint cluster region-related protein (859 aa).

Residues T26–E84 form a disordered region. The span at P54–S64 shows a compositional bias: polar residues. S57 is modified (phosphoserine). The DH domain maps to M91 to D284. Positions Q301–K459 constitute a PH domain. Residues T484–I613 form the C2 domain. In terms of domain architecture, Rho-GAP spans V647–F845.

As to quaternary structure, interacts with DLG4. As to expression, highly enriched in the brain. Much weaker expression in heart, lung and muscle.

Its subcellular location is the cell projection. It localises to the dendritic spine. The protein localises to the axon. The protein resides in the synapse. Functionally, protein with a unique structure having two opposing regulatory activities toward small GTP-binding proteins. The C-terminus is a GTPase-activating protein domain which stimulates GTP hydrolysis by RAC1, RAC2 and CDC42. Accelerates the intrinsic rate of GTP hydrolysis of RAC1 or CDC42, leading to down-regulation of the active GTP-bound form. The central Dbl homology (DH) domain functions as a guanine nucleotide exchange factor (GEF) that modulates the GTPases CDC42, RHOA and RAC1. Promotes the conversion of CDC42, RHOA and RAC1 from the GDP-bound to the GTP-bound form. Functions as an important negative regulator of neuronal RAC1 activity. Regulates macrophage functions such as CSF-1 directed motility and phagocytosis through the modulation of RAC1 activity. The polypeptide is Active breakpoint cluster region-related protein (Homo sapiens (Human)).